Here is a 65-residue protein sequence, read N- to C-terminus: Large ribosomal subunit protein bL35 (65 aa).

Belongs to the bacterial ribosomal protein bL35 family.

The polypeptide is Large ribosomal subunit protein bL35 (Oleidesulfovibrio alaskensis (strain ATCC BAA-1058 / DSM 17464 / G20) (Desulfovibrio alaskensis)).